Here is a 342-residue protein sequence, read N- to C-terminus: tRNA N6-adenosine threonylcarbamoyltransferase (342 aa).

His111 and His115 together coordinate Fe cation. Residues 134–138, Asp167, Gly180, and Asn272 each bind substrate; that span reads LVSGG. Asp300 provides a ligand contact to Fe cation.

It belongs to the KAE1 / TsaD family. Fe(2+) is required as a cofactor.

It is found in the cytoplasm. The enzyme catalyses L-threonylcarbamoyladenylate + adenosine(37) in tRNA = N(6)-L-threonylcarbamoyladenosine(37) in tRNA + AMP + H(+). In terms of biological role, required for the formation of a threonylcarbamoyl group on adenosine at position 37 (t(6)A37) in tRNAs that read codons beginning with adenine. Is involved in the transfer of the threonylcarbamoyl moiety of threonylcarbamoyl-AMP (TC-AMP) to the N6 group of A37, together with TsaE and TsaB. TsaD likely plays a direct catalytic role in this reaction. In Aromatoleum aromaticum (strain DSM 19018 / LMG 30748 / EbN1) (Azoarcus sp. (strain EbN1)), this protein is tRNA N6-adenosine threonylcarbamoyltransferase.